Reading from the N-terminus, the 325-residue chain is Transaldolase (325 aa).

The active-site Schiff-base intermediate with substrate is the K125.

This sequence belongs to the transaldolase family. Type 2 subfamily.

The protein localises to the cytoplasm. The enzyme catalyses D-sedoheptulose 7-phosphate + D-glyceraldehyde 3-phosphate = D-erythrose 4-phosphate + beta-D-fructose 6-phosphate. It participates in carbohydrate degradation; pentose phosphate pathway; D-glyceraldehyde 3-phosphate and beta-D-fructose 6-phosphate from D-ribose 5-phosphate and D-xylulose 5-phosphate (non-oxidative stage): step 2/3. Transaldolase is important for the balance of metabolites in the pentose-phosphate pathway. The sequence is that of Transaldolase from Campylobacter jejuni subsp. doylei (strain ATCC BAA-1458 / RM4099 / 269.97).